A 374-amino-acid chain; its full sequence is Alpha-galactosylglucosyldiacylglycerol synthase (374 aa).

Belongs to the glycosyltransferase group 1 family. Glycosyltransferase 4 subfamily. Requires Mg(2+) as cofactor.

It is found in the cell membrane. The enzyme catalyses a 1,2-diacyl-3-O-(alpha-D-glucopyranosyl)-sn-glycerol + UDP-alpha-D-galactose = a 1,2-diacyl-3-O-[alpha-D-galactopyranosyl-(1-&gt;2)-alpha-D-glucopyranosyl]-sn-glycerol + UDP + H(+). Its activity is regulated as follows. Activated by the negatively charged lipid phosphatidylglycerol (PG). Its function is as follows. Galactosyltransferase involved in the biosynthesis of the bilayer-forming membrane lipid alpha-galactosyl-glucosyldiacylglycerol which is involved in maintaining constant nonbilayer/bilayer conditions (curvature packing stress). Also involved in the beta-lactam resistance. Catalyzes the transfer of a galactosyl residue from UDP-Gal to alpha-glucosyl-DAG (1,2-diacyl-3-O-(alpha-D-glucopyranosyl)-sn-glycerol) acceptor to form the corresponding galactosyl-glycosyl-DAG product (3-O-alpha-(D-galactopyranosyl-alpha-(1-&gt;2)-D-glucopyranosyl)-1,2-diacyl-sn-glycerol). It can only use UDP-Gal as sugar donor and alpha-glucosyl-DAG is the preferred sugar acceptor. The protein is Alpha-galactosylglucosyldiacylglycerol synthase (cpoA) of Streptococcus pneumoniae (strain ATCC BAA-255 / R6).